The chain runs to 294 residues: Ventral anterior homeobox 2b (294 aa).

Positions 1-10 (MGDGVSEERS) are enriched in basic and acidic residues. 5 disordered regions span residues 1–27 (MGDGVSEERSPLCGKSATSCSERVRDR), 43–65 (KDIPVTSTSSPGSSKEEVLDSQS), 149–168 (RRTKQKKDQSRDSEKRSSST), 190–223 (PAPPNMISSQNNMGTSSGNGTSLGTSGSTSPVIS), and 272–294 (SSAFEPYTRLDRKDTASGKKSTS). A DNA-binding region (homeobox) is located at residues 98 to 157 (PKRTRTSFTAEQLYRLELEFQRCQYVVGRERTELARQLNLSETQVKVWFQNRRTKQKKDQ). Residues 154 to 165 (KKDQSRDSEKRS) show a composition bias toward basic and acidic residues. Over residues 197–219 (SSQNNMGTSSGNGTSLGTSGSTS) the composition is skewed to low complexity. Basic and acidic residues predominate over residues 279–288 (TRLDRKDTAS).

Belongs to the EMX homeobox family.

Its subcellular location is the nucleus. In terms of biological role, transcription factor that may function in dorsoventral specification of the forebrain. Regulates the expression of Wnt signaling antagonists. In Xenopus laevis (African clawed frog), this protein is Ventral anterior homeobox 2b (vax2-b).